Consider the following 64-residue polypeptide: Large ribosomal subunit protein uL30 (64 aa).

Residues 1–22 (MSEQVKRVRVTQVGSPIGRKPG) are disordered.

It belongs to the universal ribosomal protein uL30 family. As to quaternary structure, part of the 50S ribosomal subunit.

The sequence is that of Large ribosomal subunit protein uL30 from Acidiphilium cryptum (strain JF-5).